Here is a 415-residue protein sequence, read N- to C-terminus: Tyrosine--tRNA ligase (415 aa).

A 'HIGH' region motif is present at residues 54-63 (PTGRDIHLGH). The 'KMSKS' region motif lies at 248–252 (KMSKS). Lys-251 is a binding site for ATP. The region spanning 351-415 (AKAFYLLSAI…GKKTFRRLTR (65 aa)) is the S4 RNA-binding domain.

Belongs to the class-I aminoacyl-tRNA synthetase family. TyrS type 2 subfamily. In terms of assembly, homodimer.

It is found in the cytoplasm. The catalysed reaction is tRNA(Tyr) + L-tyrosine + ATP = L-tyrosyl-tRNA(Tyr) + AMP + diphosphate + H(+). In terms of biological role, catalyzes the attachment of tyrosine to tRNA(Tyr) in a two-step reaction: tyrosine is first activated by ATP to form Tyr-AMP and then transferred to the acceptor end of tRNA(Tyr). This Prochlorococcus marinus (strain MIT 9313) protein is Tyrosine--tRNA ligase.